We begin with the raw amino-acid sequence, 487 residues long: ATP-dependent 6-phosphofructokinase (487 aa).

Residues Gly107, 173 to 174 (RG), 198 to 201 (GDGT), and Lys226 each bind ATP. Asp199 contacts Mg(2+). Substrate is bound by residues 227–229 (TID), 272–274 (MGR), and Glu325. Asp229 acts as the Proton acceptor in catalysis. 341–343 (SGN) contacts ATP. Residue 380–383 (YMIR) participates in substrate binding. Residues 485 to 487 (AKL) carry the Peroxisomal targeting signal motif.

The protein belongs to the phosphofructokinase type A (PFKA) family. PPi-dependent PFK group II subfamily. Atypical ATP-dependent clade 'X' sub-subfamily. Homotetramer. Requires Mg(2+) as cofactor.

The protein resides in the glycosome. It carries out the reaction beta-D-fructose 6-phosphate + ATP = beta-D-fructose 1,6-bisphosphate + ADP + H(+). It participates in carbohydrate degradation; glycolysis; D-glyceraldehyde 3-phosphate and glycerone phosphate from D-glucose: step 3/4. Allosterically activated by AMP. Catalyzes the phosphorylation of D-fructose 6-phosphate to fructose 1,6-bisphosphate by ATP, the first committing step of glycolysis. The protein is ATP-dependent 6-phosphofructokinase of Trypanosoma brucei brucei.